Here is a 1058-residue protein sequence, read N- to C-terminus: Carbamoyl phosphate synthase large chain (1058 aa).

The interval M1–E401 is carboxyphosphate synthetic domain. ATP contacts are provided by R129, R169, G175, G176, R208, I210, E215, G241, I242, H243, Q284, and E298. In terms of domain architecture, ATP-grasp 1 spans K133 to V327. 3 residues coordinate Mg(2+): Q284, E298, and N300. Residues Q284, E298, and N300 each contribute to the Mn(2+) site. Residues I402–S546 form an oligomerization domain region. A carbamoyl phosphate synthetic domain region spans residues V547–N929. The region spanning E671–L861 is the ATP-grasp 2 domain. ATP is bound by residues R707, S746, I748, E752, G777, V778, H779, S780, Q820, and E832. 3 residues coordinate Mg(2+): Q820, E832, and N834. Mn(2+) contacts are provided by Q820, E832, and N834. The MGS-like domain occupies S930–I1058. The tract at residues S930 to I1058 is allosteric domain.

Belongs to the CarB family. As to quaternary structure, composed of two chains; the small (or glutamine) chain promotes the hydrolysis of glutamine to ammonia, which is used by the large (or ammonia) chain to synthesize carbamoyl phosphate. Tetramer of heterodimers (alpha,beta)4. It depends on Mg(2+) as a cofactor. Mn(2+) serves as cofactor.

The enzyme catalyses hydrogencarbonate + L-glutamine + 2 ATP + H2O = carbamoyl phosphate + L-glutamate + 2 ADP + phosphate + 2 H(+). It catalyses the reaction hydrogencarbonate + NH4(+) + 2 ATP = carbamoyl phosphate + 2 ADP + phosphate + 2 H(+). It participates in amino-acid biosynthesis; L-arginine biosynthesis; carbamoyl phosphate from bicarbonate: step 1/1. Its pathway is pyrimidine metabolism; UMP biosynthesis via de novo pathway; (S)-dihydroorotate from bicarbonate: step 1/3. Large subunit of the glutamine-dependent carbamoyl phosphate synthetase (CPSase). CPSase catalyzes the formation of carbamoyl phosphate from the ammonia moiety of glutamine, carbonate, and phosphate donated by ATP, constituting the first step of 2 biosynthetic pathways, one leading to arginine and/or urea and the other to pyrimidine nucleotides. The large subunit (synthetase) binds the substrates ammonia (free or transferred from glutamine from the small subunit), hydrogencarbonate and ATP and carries out an ATP-coupled ligase reaction, activating hydrogencarbonate by forming carboxy phosphate which reacts with ammonia to form carbamoyl phosphate. This Streptococcus pyogenes serotype M6 (strain ATCC BAA-946 / MGAS10394) protein is Carbamoyl phosphate synthase large chain.